Reading from the N-terminus, the 77-residue chain is Putative defensin-like protein 158 (77 aa).

Positions Met-1–Gly-24 are cleaved as a signal peptide. 4 disulfide bridges follow: Cys-31/Cys-77, Cys-41/Cys-60, Cys-46/Cys-71, and Cys-50/Cys-73.

This sequence belongs to the DEFL family.

It localises to the secreted. The chain is Putative defensin-like protein 158 (LCR23) from Arabidopsis thaliana (Mouse-ear cress).